Here is a 387-residue protein sequence, read N- to C-terminus: Succinate--CoA ligase [ADP-forming] subunit beta (387 aa).

The region spanning 9–236 is the ATP-grasp domain; it reads KELFAKHNVP…KDATDPLELK (228 aa). ATP is bound by residues Lys-45, 52-54, Ser-94, and Glu-99; that span reads GRG. Residues Asn-191 and Asp-205 each coordinate Mg(2+). Residues Asn-256 and 318-320 each bind substrate; that span reads GIT.

It belongs to the succinate/malate CoA ligase beta subunit family. Heterotetramer of two alpha and two beta subunits. Requires Mg(2+) as cofactor.

The enzyme catalyses succinate + ATP + CoA = succinyl-CoA + ADP + phosphate. The catalysed reaction is GTP + succinate + CoA = succinyl-CoA + GDP + phosphate. Its pathway is carbohydrate metabolism; tricarboxylic acid cycle; succinate from succinyl-CoA (ligase route): step 1/1. Its function is as follows. Succinyl-CoA synthetase functions in the citric acid cycle (TCA), coupling the hydrolysis of succinyl-CoA to the synthesis of either ATP or GTP and thus represents the only step of substrate-level phosphorylation in the TCA. The beta subunit provides nucleotide specificity of the enzyme and binds the substrate succinate, while the binding sites for coenzyme A and phosphate are found in the alpha subunit. In Mycolicibacterium vanbaalenii (strain DSM 7251 / JCM 13017 / BCRC 16820 / KCTC 9966 / NRRL B-24157 / PYR-1) (Mycobacterium vanbaalenii), this protein is Succinate--CoA ligase [ADP-forming] subunit beta.